Here is a 292-residue protein sequence, read N- to C-terminus: ATP synthase gamma chain (292 aa).

This sequence belongs to the ATPase gamma chain family. In terms of assembly, F-type ATPases have 2 components, CF(1) - the catalytic core - and CF(0) - the membrane proton channel. CF(1) has five subunits: alpha(3), beta(3), gamma(1), delta(1), epsilon(1). CF(0) has three main subunits: a, b and c.

The protein resides in the cell inner membrane. In terms of biological role, produces ATP from ADP in the presence of a proton gradient across the membrane. The gamma chain is believed to be important in regulating ATPase activity and the flow of protons through the CF(0) complex. This is ATP synthase gamma chain from Brucella ovis (strain ATCC 25840 / 63/290 / NCTC 10512).